Here is a 451-residue protein sequence, read N- to C-terminus: Putative metabolite transport protein YyaJ (451 aa).

The Cytoplasmic portion of the chain corresponds to 1–29; that stretch reads MNTIFKQKNTHPFSNAANRLDRLPISRVH. The chain crosses the membrane as a helical span at residues 30–50; it reads FQVLTALGIVYFFDLADLFTL. At 51-60 the chain is on the extracellular side; that stretch reads SNVAPALIEH. A helical transmembrane segment spans residues 61–81; it reads WGIPLSTIANVTAASFLGMFL. Residues 82-97 are Cytoplasmic-facing; that stretch reads GASLGGRLSDRIGRKK. The helical transmembrane segment at 98–118 threads the bilayer; that stretch reads ALNLFVFVFSIASLCNAAAWD. Residues 119-124 lie on the Extracellular side of the membrane; that stretch reads IPSLMT. Residues 125–145 form a helical membrane-spanning segment; the sequence is FRFLTGFGVAAAMVITNSYLA. Topologically, residues 146–157 are cytoplasmic; the sequence is EFFPSSVRGKYI. A helical transmembrane segment spans residues 158-178; it reads SFCAMIGLIGVPITNIVSAFV. The Extracellular portion of the chain corresponds to 179-182; it reads IPLG. A helical transmembrane segment spans residues 183–203; the sequence is SWGWRLVFVWGAVGLIYFFFI. The Cytoplasmic segment spans residues 204 to 270; the sequence is HRLEESPRWH…LLKGRNLKIT (67 aa). A helical transmembrane segment spans residues 271 to 291; that stretch reads IVLSAVWIFETFGFYGFASWV. Over 292–305 the chain is Extracellular; sequence PSLLKSNGVTMENT. Residues 306–326 traverse the membrane as a helical segment; the sequence is LWYNVLHSVGAPLGALLGSMI. Over 327–333 the chain is Cytoplasmic; sequence SERFQRK. A helical transmembrane segment spans residues 334-354; it reads WILAASAFLTAIAGLLYGMTF. Residues 355–357 lie on the Extracellular side of the membrane; it reads IPI. The helical transmembrane segment at 358–378 threads the bilayer; that stretch reads MIIVFGFIVNITERVFTSNLY. Residues 379 to 396 are Cytoplasmic-facing; sequence AYTSEPYPTEYRSSGSGL. Residues 397–417 traverse the membrane as a helical segment; the sequence is AYGLGRFSNIFGSLLVGFIAV. The Extracellular segment spans residues 418–421; sequence QLGY. A helical membrane pass occupies residues 422–442; it reads ISVFLFIGGCWLACSLLLIFF. Residues 443–451 are Cytoplasmic-facing; sequence GPNTNAKQI.

The protein belongs to the major facilitator superfamily. Sugar transporter (TC 2.A.1.1) family.

The protein resides in the cell membrane. This Bacillus subtilis (strain 168) protein is Putative metabolite transport protein YyaJ (yyaJ).